The chain runs to 248 residues: Ribonuclease PH (248 aa).

Phosphate-binding positions include Arg86 and 124–126; that span reads GTR.

The protein belongs to the RNase PH family. As to quaternary structure, homohexameric ring arranged as a trimer of dimers.

The catalysed reaction is tRNA(n+1) + phosphate = tRNA(n) + a ribonucleoside 5'-diphosphate. Functionally, phosphorolytic 3'-5' exoribonuclease that plays an important role in tRNA 3'-end maturation. Removes nucleotide residues following the 3'-CCA terminus of tRNAs; can also add nucleotides to the ends of RNA molecules by using nucleoside diphosphates as substrates, but this may not be physiologically important. Probably plays a role in initiation of 16S rRNA degradation (leading to ribosome degradation) during starvation. This Listeria innocua serovar 6a (strain ATCC BAA-680 / CLIP 11262) protein is Ribonuclease PH.